The following is an 887-amino-acid chain: Lon protease homolog 2, peroxisomal (887 aa).

The Lon N-terminal domain occupies 11–256; the sequence is LGILAFRNKV…KATELVDRHL (246 aa). The tract at residues 72–101 is disordered; it reads YPGGGTDSGERNVKSQPGLSDSRKADGKSQ. 409-416 is an ATP binding site; it reads GPPGVGKT. Residues 693-878 enclose the Lon proteolytic domain; it reads VSNPGVSVGL…EVLEQAFEGG (186 aa). Catalysis depends on residues Ser784 and Lys827. Residues 885–887 carry the Microbody targeting signal motif; the sequence is ARL.

This sequence belongs to the peptidase S16 family.

It localises to the peroxisome matrix. It carries out the reaction Hydrolysis of proteins in presence of ATP.. ATP-dependent serine protease that mediates the selective degradation of misfolded and unassembled polypeptides in the peroxisomal matrix. Necessary for type 2 peroxisome targeting signal (PTS2)-containing protein processing and facilitates peroxisome matrix protein import. In Spinacia oleracea (Spinach), this protein is Lon protease homolog 2, peroxisomal.